A 342-amino-acid chain; its full sequence is Autoinducer 2 import system permease protein LsrC (342 aa).

The Periplasmic portion of the chain corresponds to M1–A13. The chain crosses the membrane as a helical span at residues L14 to V34. The Cytoplasmic portion of the chain corresponds to Q35–T38. A helical transmembrane segment spans residues M39–L59. At T60–S69 the chain is on the periplasmic side. Residues I70–V90 traverse the membrane as a helical segment. Over A91–C92 the chain is Cytoplasmic. A helical transmembrane segment spans residues V93–L113. A topological domain (periplasmic) is located at residue K114. The helical transmembrane segment at I115–W135 threads the bilayer. Topologically, residues T136–P154 are cytoplasmic. Residues L155 to W175 traverse the membrane as a helical segment. Over L176–S212 the chain is Periplasmic. The chain crosses the membrane as a helical span at residues L213–P233. Residues N234–G251 are Cytoplasmic-facing. The helical transmembrane segment at G252–L272 threads the bilayer. Residues T273–R283 are Periplasmic-facing. The helical transmembrane segment at I284 to D304 threads the bilayer. The Cytoplasmic segment spans residues G305–A342.

The protein belongs to the binding-protein-dependent transport system permease family. AraH/RbsC subfamily. In terms of assembly, the complex is composed of two ATP-binding proteins (LsrA), two transmembrane proteins (LsrC and LsrD) and a solute-binding protein (LsrB).

It localises to the cell inner membrane. In terms of biological role, part of the ABC transporter complex LsrABCD involved in autoinducer 2 (AI-2) import. Probably responsible for the translocation of the substrate across the membrane. The chain is Autoinducer 2 import system permease protein LsrC (lsrC) from Escherichia coli (strain K12 / DH10B).